A 260-amino-acid polypeptide reads, in one-letter code: Magnesium dechelatase SGRL, chloroplastic (260 aa).

The N-terminal 45 residues, 1-45 (MACYIVPYYHHPVLSHPNREIFSHRHHHHHRFCNNLLNRRISVPR), are a transit peptide targeting the chloroplast.

It belongs to the staygreen family. Interacts with the light harvesting complex II (LHCII). Interacts with the chlorophyll catabolic enzymes (CCEs) NYC1, NOL, PAO and RCCR. In terms of tissue distribution, expressed in cotyledons, pollen and young leaves.

It localises to the plastid. The protein localises to the chloroplast thylakoid. It catalyses the reaction chlorophyllide a + 2 H(+) = pheophorbide a + Mg(2+). Its function is as follows. Magnesium chelatase involved in chlorophyll a degradation in the chlorophyll-protein complexes of photosystem I (PSI) and photosystem II (PSII). Contributes to the degradation of PSI and PSII in the thylakoid membranes. Recombinant SGRL possesses high dechelating activity against chlorophyllide a, very low activity against chlorophyll a, and no activity against chlorophyll b. Contributes to abiotic stress-induced chlorophyll degradation and leaf yellowing during vegetative plant growth. The chain is Magnesium dechelatase SGRL, chloroplastic from Arabidopsis thaliana (Mouse-ear cress).